A 290-amino-acid chain; its full sequence is Light-independent protochlorophyllide reductase iron-sulfur ATP-binding protein (290 aa).

ATP contacts are provided by residues 10 to 15 and Lys39; that span reads GIGKST. Ser14 is a binding site for Mg(2+). The [4Fe-4S] cluster site is built by Cys95 and Cys129. 180-181 is a binding site for ATP; the sequence is NR.

It belongs to the NifH/BchL/ChlL family. Homodimer. Protochlorophyllide reductase is composed of three subunits; ChlL, ChlN and ChlB. It depends on [4Fe-4S] cluster as a cofactor.

It localises to the plastid. The protein resides in the chloroplast. It carries out the reaction chlorophyllide a + oxidized 2[4Fe-4S]-[ferredoxin] + 2 ADP + 2 phosphate = protochlorophyllide a + reduced 2[4Fe-4S]-[ferredoxin] + 2 ATP + 2 H2O. The protein operates within porphyrin-containing compound metabolism; chlorophyll biosynthesis (light-independent). Its function is as follows. Component of the dark-operative protochlorophyllide reductase (DPOR) that uses Mg-ATP and reduced ferredoxin to reduce ring D of protochlorophyllide (Pchlide) to form chlorophyllide a (Chlide). This reaction is light-independent. The L component serves as a unique electron donor to the NB-component of the complex, and binds Mg-ATP. This chain is Light-independent protochlorophyllide reductase iron-sulfur ATP-binding protein, found in Chaetosphaeridium globosum (Charophycean green alga).